The following is a 336-amino-acid chain: Anthranilate phosphoribosyltransferase (336 aa).

5-phospho-alpha-D-ribose 1-diphosphate-binding positions include glycine 79, 82-83 (GD), threonine 87, 89-92 (NISS), 107-115 (KHGNRSVSS), and serine 119. Position 79 (glycine 79) interacts with anthranilate. Serine 91 is a binding site for Mg(2+). Asparagine 110 provides a ligand contact to anthranilate. Position 165 (arginine 165) interacts with anthranilate. Mg(2+) is bound by residues aspartate 223 and glutamate 224.

The protein belongs to the anthranilate phosphoribosyltransferase family. As to quaternary structure, homodimer. Requires Mg(2+) as cofactor.

It carries out the reaction N-(5-phospho-beta-D-ribosyl)anthranilate + diphosphate = 5-phospho-alpha-D-ribose 1-diphosphate + anthranilate. It functions in the pathway amino-acid biosynthesis; L-tryptophan biosynthesis; L-tryptophan from chorismate: step 2/5. Functionally, catalyzes the transfer of the phosphoribosyl group of 5-phosphorylribose-1-pyrophosphate (PRPP) to anthranilate to yield N-(5'-phosphoribosyl)-anthranilate (PRA). In Tolumonas auensis (strain DSM 9187 / NBRC 110442 / TA 4), this protein is Anthranilate phosphoribosyltransferase.